The chain runs to 86 residues: Insulin (86 aa).

3 disulfides stabilise this stretch: Cys-7–Cys-72, Cys-19–Cys-85, and Cys-71–Cys-76. Residues 33–63 (EAEDPQVGEVELGGGPGLGGLQPLALAGPQQ) constitute a propeptide, c peptide.

This sequence belongs to the insulin family. Heterodimer of a B chain and an A chain linked by two disulfide bonds.

The protein resides in the secreted. Its function is as follows. Insulin decreases blood glucose concentration. It increases cell permeability to monosaccharides, amino acids and fatty acids. It accelerates glycolysis, the pentose phosphate cycle, and glycogen synthesis in liver. The polypeptide is Insulin (INS) (Equus caballus (Horse)).